Reading from the N-terminus, the 409-residue chain is Killer cell lectin-like receptor subfamily G member 2 (409 aa).

The segment at 1–120 is disordered; sequence MEESWEAAPG…GAEPAPSAWA (120 aa). The span at 41-53 shows a compositional bias: low complexity; that stretch reads PEGPESSPSPAGA. The segment covering 72-81 has biased composition (pro residues); it reads SPRPGSPRVP. Residues 104–120 are compositionally biased toward low complexity; the sequence is PRNGEAPGAEPAPSAWA. At S158 the chain carries Phosphoserine. The segment at 193–216 is disordered; that stretch reads TESGCDAEGRASPAEGSAGSPGSP. Over residues 202–216 the composition is skewed to low complexity; sequence RASPAEGSAGSPGSP. A helical membrane pass occupies residues 263–283; it reads WALAFMAVLLAVSGVVIVVLA. The C-type lectin domain maps to 300-405; it reads SEEHCYYFSA…CSTPRPWVCA (106 aa). 2 disulfides stabilise this stretch: C321–C404 and C383–C396.

Its subcellular location is the membrane. This Homo sapiens (Human) protein is Killer cell lectin-like receptor subfamily G member 2 (KLRG2).